The primary structure comprises 352 residues: Putative killer cell immunoglobulin-like receptor-like protein KIR3DX1 (352 aa).

The signal sequence occupies residues 1–16 (MAPKLITVLCLGFCLN). 2 consecutive Ig-like C2-type domains span residues 17–112 (QKIC…NSLK) and 224–311 (PSLS…VTRC). 2 cysteine pairs are disulfide-bonded: Cys49/Cys94 and Cys244/Cys295. N-linked (GlcNAc...) asparagine glycosylation is present at Asn78.

In terms of tissue distribution, expressed in NK-cells.

The protein resides in the secreted. This chain is Putative killer cell immunoglobulin-like receptor-like protein KIR3DX1 (KIR3DX1), found in Homo sapiens (Human).